The following is a 249-amino-acid chain: uncharacterized protein (249 aa).

The protein belongs to the ycf23 family.

It localises to the plastid. Its subcellular location is the chloroplast. This is an uncharacterized protein from Cyanidium caldarium (Red alga).